A 715-amino-acid chain; its full sequence is Palmitoyltransferase ZDHHC5 (715 aa).

The Cytoplasmic segment spans residues 1–13 (MPAESGKRFKPSK). The helical transmembrane segment at 14 to 34 (YVPVSAAAIFLVGATTLFFAF) threads the bilayer. At 35 to 52 (TCPGLSLDVSPAVPIYNA) the chain is on the extracellular side. Residues 53 to 73 (IMFLFVLANFSMATFMDPGIF) form a helical membrane-spanning segment. At 74–148 (PRAEEDEDKE…NCIGRRNYRY (75 aa)) the chain is on the cytoplasmic side. Position 91 is a phosphotyrosine (Tyr91). Positions 104–154 (KWCATCRFYRPPRCSHCSVCDNCVEEFDHHCPWVNNCIGRRNYRYFFLFLL) constitute a DHHC domain. The active-site S-palmitoyl cysteine intermediate is the Cys134. The helical transmembrane segment at 149 to 169 (FFLFLLSLTAHIMGVFGFGLL) threads the bilayer. Residues 170–191 (YVLCHIEELSGVRTAVTMAVMC) lie on the Extracellular side of the membrane. The helical transmembrane segment at 192–212 (VAGLFFIPVAGLTGFHVVLVA) threads the bilayer. Topologically, residues 213-715 (RGRTTNEQVT…VGGTTYEISV (503 aa)) are cytoplasmic. Ser247 bears the Phosphoserine mark. Residues 289–715 (GELRRTKSKG…VGGTTYEISV (427 aa)) form a disordered region. A Phosphothreonine modification is found at Thr294. Phosphoserine occurs at positions 296 and 299. Position 303 is a phosphothreonine (Thr303). Ser345 carries the phosphoserine modification. 2 positions are modified to phosphothreonine: Thr348 and Thr350. The span at 359 to 373 (SSSSTSAAMPHSSSA) shows a compositional bias: low complexity. Residues Ser380, Ser398, Ser406, and Ser409 each carry the phosphoserine modification. Thr411 is modified (phosphothreonine). Ser415, Ser425, Ser429, and Ser432 each carry phosphoserine. Low complexity predominate over residues 422 to 432 (SSGSRSSSLKS). Position 436 is a phosphothreonine (Thr436). Residues 442 to 478 (QLQSIRSEGTTSTSYKSLANQTRNGSLSYDSLLTPSD) show a composition bias toward polar residues. Phosphoserine is present on residues Ser529 and Ser554. Low complexity predominate over residues 581-597 (PRTSSSSDDSKRSPLSK). Residue Arg617 is modified to Omega-N-methylarginine. The residue at position 621 (Ser621) is a Phosphoserine. Thr659 carries the post-translational modification Phosphothreonine. Over residues 666–677 (LKTTYSKSNGQP) the composition is skewed to polar residues. 2 positions are modified to phosphoserine: Ser684 and Ser694. Arg697 carries the omega-N-methylarginine modification.

It belongs to the DHHC palmitoyltransferase family. ERF2/ZDHHC9 subfamily. Post-translationally, autopalmitoylated. Palmitoylation of the C-terminal tail regulates stimulation-dependent plasma membrane motility. In terms of processing, phosphorylation regulates association with endocytic proteins and its subcellular localization. Phosphorylation by LYN during fatty acid uptake leads to inactivation of the activity.

The protein resides in the cell membrane. It carries out the reaction L-cysteinyl-[protein] + hexadecanoyl-CoA = S-hexadecanoyl-L-cysteinyl-[protein] + CoA. Its function is as follows. Palmitoyltransferase that catalyzes the addition of palmitate onto various protein substrates such as CTNND2, CD36, GSDMD, NLRP3, NOD1, NOD2, STAT3 and S1PR1 thus plays a role in various biological processes including cell adhesion, inflammation, fatty acid uptake, bacterial sensing or cardiac functions. Plays an important role in the regulation of synapse efficacy by mediating palmitoylation of delta-catenin/CTNND2, thereby increasing synaptic delivery and surface stabilization of alpha-amino-3-hydroxy-5-methyl-4-isoxazole propionic acid receptors (AMPARs). Under basal conditions, remains at the synaptic membrane through FYN-mediated phosphorylation that prevents association with endocytic proteins. Neuronal activity enhances the internalization and trafficking of DHHC5 from spines to dendritic shafts where it palmitoylates delta-catenin/CTNND2. Regulates cell adhesion at the plasma membrane by palmitoylating GOLGA7B and DSG2. Plays a role in innate immune response by mediating the palmitoylation of NOD1 and NOD2 and their proper recruitment to the bacterial entry site and phagosomes. Also participates in fatty acid uptake by palmitoylating CD36 and thereby targeting it to the plasma membrane. Upon binding of fatty acids to CD36, gets phosphorylated by LYN leading to inactivation and subsequent CD36 caveolar endocytosis. Controls oligodendrocyte development by catalyzing STAT3 palmitoylation. Acts as a regulator of inflammatory response by mediating palmitoylation of NLRP3 and GSDMD. Palmitoylates NLRP3 to promote inflammasome assembly and activation. Activates pyroptosis by catalyzing palmitoylation of gasdermin-D (GSDMD), thereby promoting membrane translocation and pore formation of GSDMD. This chain is Palmitoyltransferase ZDHHC5 (Zdhhc5), found in Rattus norvegicus (Rat).